Consider the following 147-residue polypeptide: DNA polymerase III subunit chi (147 aa).

It belongs to the DNA polymerase III chi/HolC chain family. As to quaternary structure, the DNA polymerase III holoenzyme complex contains at least 10 different subunits organized into 3 functionally essential subassemblies: the Pol III core, the beta sliding clamp processivity factor and the clamp-loading complex. The Pol III core (subunits alpha, epsilon and theta) contains the polymerase and the 3'-5' exonuclease proofreading activities. The polymerase is tethered to the template via the dimeric beta sliding clamp processivity factor. The clamp-loading complex (also called gamma complex) assembles the beta sliding clamp onto the primed template and plays a central role in the organization and communication at the replication fork. The clamp-loading complex contains delta, delta', psi and chi, and 3 copies of either or both of two different DnaX proteins, gamma and tau. The DNA replisome complex has a single clamp loader (3 tau and 1 each of delta, delta', psi and chi subunits) which binds 3 Pol III cores (1 core on the leading strand and 2 on the lagging strand) each with a beta sliding clamp dimer. Additional proteins in the replisome are other copies of gamma, psi (holD) and chi (this protein), SSB, DNA helicase and RNA primase. The clamp loader hydrolyzes ATP to assemble the beta processivity factor onto the primed template and plays a central role in the organization and communication at the replication fork. The only subunit of the DNA polymerase III holoenzyme known to interact with single-stranded DNA binding protein (SSB). Interacts directly with the psi subunit (holD). Interacts directly with DNA helicase YoaA. It binds to HolD and YoaA, but not both simultaneously.

The enzyme catalyses DNA(n) + a 2'-deoxyribonucleoside 5'-triphosphate = DNA(n+1) + diphosphate. In terms of biological role, part of the beta sliding clamp loading complex, which hydrolyzes ATP to load the beta clamp onto primed DNA to form the DNA replication pre-initiation complex. DNA polymerase III is a complex, multichain enzyme responsible for most of the replicative synthesis in bacteria. This DNA polymerase also exhibits 3' to 5' exonuclease activity. Genetically identified as involved in the repair of replication forks and tolerance of the chain-terminating nucleoside analog 3' AZT. This subunit may stabilize YoaA and/or stimulate the helicase activity of YoaA. This chain is DNA polymerase III subunit chi, found in Escherichia coli (strain K12).